The chain runs to 39 residues: Large ribosomal subunit protein bL36 (39 aa).

Belongs to the bacterial ribosomal protein bL36 family.

This is Large ribosomal subunit protein bL36 from Oenococcus oeni (strain ATCC BAA-331 / PSU-1).